Consider the following 128-residue polypeptide: Large ribosomal subunit protein bL12 (128 aa).

It belongs to the bacterial ribosomal protein bL12 family. In terms of assembly, homodimer. Part of the ribosomal stalk of the 50S ribosomal subunit. Forms a multimeric L10(L12)X complex, where L10 forms an elongated spine to which 2 to 4 L12 dimers bind in a sequential fashion. Binds GTP-bound translation factors.

Its function is as follows. Forms part of the ribosomal stalk which helps the ribosome interact with GTP-bound translation factors. Is thus essential for accurate translation. In Thermotoga petrophila (strain ATCC BAA-488 / DSM 13995 / JCM 10881 / RKU-1), this protein is Large ribosomal subunit protein bL12.